Here is a 115-residue protein sequence, read N- to C-terminus: NADH-ubiquinone oxidoreductase chain 3 (115 aa).

A run of 3 helical transmembrane segments spans residues 4–24 (LLVI…AFWL), 55–75 (FFLV…LLPI), and 84–104 (INMV…GLAY).

It belongs to the complex I subunit 3 family. As to quaternary structure, core subunit of respiratory chain NADH dehydrogenase (Complex I) which is composed of 45 different subunits. Interacts with TMEM186. Interacts with TMEM242.

It localises to the mitochondrion inner membrane. The catalysed reaction is a ubiquinone + NADH + 5 H(+)(in) = a ubiquinol + NAD(+) + 4 H(+)(out). In terms of biological role, core subunit of the mitochondrial membrane respiratory chain NADH dehydrogenase (Complex I) which catalyzes electron transfer from NADH through the respiratory chain, using ubiquinone as an electron acceptor. Essential for the catalytic activity of complex I. This chain is NADH-ubiquinone oxidoreductase chain 3, found in Ochrotomys nuttalli (Golden mouse).